Consider the following 322-residue polypeptide: tRNA U34 carboxymethyltransferase (322 aa).

Residues Lys-91, Trp-105, Lys-110, Gly-129, 179–180, Met-195, Tyr-199, and Arg-314 contribute to the carboxy-S-adenosyl-L-methionine site; that span reads LE.

This sequence belongs to the class I-like SAM-binding methyltransferase superfamily. CmoB family. Homotetramer.

The catalysed reaction is carboxy-S-adenosyl-L-methionine + 5-hydroxyuridine(34) in tRNA = 5-carboxymethoxyuridine(34) in tRNA + S-adenosyl-L-homocysteine + H(+). In terms of biological role, catalyzes carboxymethyl transfer from carboxy-S-adenosyl-L-methionine (Cx-SAM) to 5-hydroxyuridine (ho5U) to form 5-carboxymethoxyuridine (cmo5U) at position 34 in tRNAs. This is tRNA U34 carboxymethyltransferase from Pseudomonas aeruginosa (strain LESB58).